A 117-amino-acid chain; its full sequence is MHELTLCQRAIEIIEQQAQQHGAKKVTAVWLEIGAFSCVETSSLDFCFGMVCRRTLAEGCQLHLHQQEAECWCYDCQQSVTLLTIQVRRCPQCQGDNLRIVADDGIQLKRMEIEQEI.

Position 2 (His-2) interacts with Ni(2+). Cys-73, Cys-76, Cys-90, and Cys-93 together coordinate Zn(2+).

This sequence belongs to the HypA/HybF family.

Functionally, involved in the maturation of [NiFe] hydrogenases. Required for nickel insertion into the metal center of the hydrogenase. This Pectobacterium atrosepticum (strain SCRI 1043 / ATCC BAA-672) (Erwinia carotovora subsp. atroseptica) protein is Hydrogenase maturation factor HypA.